The primary structure comprises 278 residues: Urease accessory protein UreD (278 aa).

This sequence belongs to the UreD family. UreD, UreF and UreG form a complex that acts as a GTP-hydrolysis-dependent molecular chaperone, activating the urease apoprotein by helping to assemble the nickel containing metallocenter of UreC. The UreE protein probably delivers the nickel.

The protein resides in the cytoplasm. Functionally, required for maturation of urease via the functional incorporation of the urease nickel metallocenter. In Blochmanniella pennsylvanica (strain BPEN), this protein is Urease accessory protein UreD.